The primary structure comprises 506 residues: RNA-splicing ligase RtcB homolog (506 aa).

Positions 120, 123, 228, 260, and 354 each coordinate Mn(2+). A GMP-binding site is contributed by 227–231 (NHYAE). GMP is bound by residues 354–355 (HN), 403–406 (GGSM), Ser-410, 429–432 (HGAG), and Lys-505. His-429 (GMP-histidine intermediate) is an active-site residue.

This sequence belongs to the RtcB family. Catalytic component of the tRNA-splicing ligase complex. The cofactor is Mn(2+).

It catalyses the reaction a 3'-end 3'-phospho-ribonucleotide-RNA + a 5'-end dephospho-ribonucleoside-RNA + GTP = a ribonucleotidyl-ribonucleotide-RNA + GMP + diphosphate. It carries out the reaction a 3'-end 2',3'-cyclophospho-ribonucleotide-RNA + a 5'-end dephospho-ribonucleoside-RNA + GTP + H2O = a ribonucleotidyl-ribonucleotide-RNA + GMP + diphosphate + H(+). In terms of biological role, catalytic subunit of the tRNA-splicing ligase complex that acts by directly joining spliced tRNA halves to mature-sized tRNAs by incorporating the precursor-derived splice junction phosphate into the mature tRNA as a canonical 3',5'-phosphodiester. May act as an RNA ligase with broad substrate specificity, and may function toward other RNAs. This Aedes aegypti (Yellowfever mosquito) protein is RNA-splicing ligase RtcB homolog.